The primary structure comprises 327 residues: Zinc transport protein ZntB (327 aa).

Topologically, residues 1–273 (MEAIKGSDVN…ARRTYTMSLM (273 aa)) are cytoplasmic. The chain crosses the membrane as a helical span at residues 274-294 (AMVFLPSTFLTGLFGVNLGGI). Residues 295–300 (PGGGWQ) lie on the Periplasmic side of the membrane. A helical membrane pass occupies residues 301–321 (FGFSIFCILLVVLIGGVALWL). The Cytoplasmic segment spans residues 322-327 (HRSKWL).

This sequence belongs to the CorA metal ion transporter (MIT) (TC 1.A.35) family.

The protein localises to the cell inner membrane. It carries out the reaction Zn(2+)(out) + H(+)(out) = Zn(2+)(in) + H(+)(in). Functionally, zinc transporter. Acts as a Zn(2+):proton symporter, which likely mediates zinc ion uptake. This Escherichia coli O8 (strain IAI1) protein is Zinc transport protein ZntB.